The chain runs to 287 residues: Ciliary microtubule inner protein 6 (287 aa).

Basic and acidic residues-rich tracts occupy residues M1–D15 and E25–G34. The tract at residues M1 to S42 is disordered. A mn 1 region spans residues G128–T160. Residues K179–E287 are disordered. Basic and acidic residues-rich tracts occupy residues E203–N212 and L232–Q245. A mn 2 region spans residues S213–A246.

It localises to the cell projection. The protein localises to the cilium. The polypeptide is Ciliary microtubule inner protein 6 (Homo sapiens (Human)).